The primary structure comprises 287 residues: Probable phosphite transport system-binding protein PtxB (287 aa).

The first 23 residues, 1-23, serve as a signal peptide directing secretion; sequence MKRLSALLLTCLLSAVSSLSALA.

This sequence belongs to the phosphate/phosphite/phosphonate binding protein family.

Functionally, probably forms part of a binding-protein-dependent phosphite transporter. Required for oxidation of phosphite to phosphate. This is Probable phosphite transport system-binding protein PtxB (ptxB) from Stutzerimonas stutzeri (Pseudomonas stutzeri).